A 339-amino-acid chain; its full sequence is Probable cytosolic iron-sulfur protein assembly protein CIAO1 (339 aa).

WD repeat units follow at residues 14–53 (HPDS…WICK), 59–98 (GHQR…FECV), 103–142 (GHEN…EYEC), 148–187 (SHTQ…WVCC), 192–231 (GHES…NEQG), 250–289 (FHTR…DPQQ), and 301–339 (AHSQ…PAGL). The short motif at 176-178 (LYQ) is the LYR motif; required for interaction with HSC20 element.

The protein belongs to the WD repeat CIA1 family. Component of the CIA complex. Interacts with CIAO2A and forms a complex with CIAO2B and MMS19; the interactions with CIAO2A and CIAO2B are mutually exclusive. Interacts with CHD1L, ERCC2, IREB2 and POLD1. Component of the MMXD complex, which includes CIAO1, ERCC2, CIAO2B, MMS19 and SLC25A5. Interacts with WT1. Interacts with CIAO3. Interacts (via LYR motif) with HSC20.

The protein resides in the cytoplasm. Functionally, key component of the cytosolic iron-sulfur protein assembly (CIA) complex, a multiprotein complex that mediates the incorporation of iron-sulfur cluster into extramitochondrial Fe/S proteins. As a CIA complex component, interacts specifically with CIAO2A or CIAO2B and MMS19 to assist different branches of iron-sulfur protein assembly, depending of its interactors. The complex CIAO1:CIAO2B:MMS19 binds to and facilitates the assembly of most cytosolic-nuclear Fe/S proteins. CIAO1:CIAO2A specifically matures ACO1 and stabilizes IREB2. Seems to specifically modulate the transactivation activity of WT1. As part of the mitotic spindle-associated MMXD complex it may play a role in chromosome segregation. The protein is Probable cytosolic iron-sulfur protein assembly protein CIAO1 of Rattus norvegicus (Rat).